The sequence spans 48 residues: Large ribosomal subunit protein bL33B (48 aa).

The protein belongs to the bacterial ribosomal protein bL33 family.

This is Large ribosomal subunit protein bL33B (rpmG2) from Mycoplasma genitalium (strain ATCC 33530 / DSM 19775 / NCTC 10195 / G37) (Mycoplasmoides genitalium).